A 262-amino-acid chain; its full sequence is Acyl-[acyl-carrier-protein]--UDP-N-acetylglucosamine O-acyltransferase (262 aa).

The protein belongs to the transferase hexapeptide repeat family. LpxA subfamily. Homotrimer.

The protein resides in the cytoplasm. It carries out the reaction a (3R)-hydroxyacyl-[ACP] + UDP-N-acetyl-alpha-D-glucosamine = a UDP-3-O-[(3R)-3-hydroxyacyl]-N-acetyl-alpha-D-glucosamine + holo-[ACP]. It participates in glycolipid biosynthesis; lipid IV(A) biosynthesis; lipid IV(A) from (3R)-3-hydroxytetradecanoyl-[acyl-carrier-protein] and UDP-N-acetyl-alpha-D-glucosamine: step 1/6. Involved in the biosynthesis of lipid A, a phosphorylated glycolipid that anchors the lipopolysaccharide to the outer membrane of the cell. This is Acyl-[acyl-carrier-protein]--UDP-N-acetylglucosamine O-acyltransferase from Burkholderia multivorans (strain ATCC 17616 / 249).